A 463-amino-acid polypeptide reads, in one-letter code: Siroheme synthase 1 (463 aa).

The precorrin-2 dehydrogenase /sirohydrochlorin ferrochelatase stretch occupies residues 1 to 203 (MDFLPLFCQL…GQQQAAEESV (203 aa)). NAD(+) is bound by residues 22–23 (EV) and 43–44 (PH). Residue S128 is modified to Phosphoserine. The tract at residues 215–463 (GSVTLVGAGP…YGEANTLAGV (249 aa)) is uroporphyrinogen-III C-methyltransferase. Position 224 (P224) interacts with S-adenosyl-L-methionine. Residue D247 is the Proton acceptor of the active site. K269 functions as the Proton donor in the catalytic mechanism. Residues 300-302 (GGD), I305, 330-331 (TA), M382, and G411 contribute to the S-adenosyl-L-methionine site.

It in the N-terminal section; belongs to the precorrin-2 dehydrogenase / sirohydrochlorin ferrochelatase family. The protein in the C-terminal section; belongs to the precorrin methyltransferase family.

It carries out the reaction uroporphyrinogen III + 2 S-adenosyl-L-methionine = precorrin-2 + 2 S-adenosyl-L-homocysteine + H(+). The catalysed reaction is precorrin-2 + NAD(+) = sirohydrochlorin + NADH + 2 H(+). The enzyme catalyses siroheme + 2 H(+) = sirohydrochlorin + Fe(2+). The protein operates within cofactor biosynthesis; adenosylcobalamin biosynthesis; precorrin-2 from uroporphyrinogen III: step 1/1. Its pathway is cofactor biosynthesis; adenosylcobalamin biosynthesis; sirohydrochlorin from precorrin-2: step 1/1. It functions in the pathway porphyrin-containing compound metabolism; siroheme biosynthesis; precorrin-2 from uroporphyrinogen III: step 1/1. It participates in porphyrin-containing compound metabolism; siroheme biosynthesis; siroheme from sirohydrochlorin: step 1/1. The protein operates within porphyrin-containing compound metabolism; siroheme biosynthesis; sirohydrochlorin from precorrin-2: step 1/1. Its function is as follows. Multifunctional enzyme that catalyzes the SAM-dependent methylations of uroporphyrinogen III at position C-2 and C-7 to form precorrin-2 via precorrin-1. Then it catalyzes the NAD-dependent ring dehydrogenation of precorrin-2 to yield sirohydrochlorin. Finally, it catalyzes the ferrochelation of sirohydrochlorin to yield siroheme. The chain is Siroheme synthase 1 from Aeromonas hydrophila subsp. hydrophila (strain ATCC 7966 / DSM 30187 / BCRC 13018 / CCUG 14551 / JCM 1027 / KCTC 2358 / NCIMB 9240 / NCTC 8049).